The sequence spans 513 residues: MSTHFVDRVVVHASGGDGGNGCASVHREKFKPLGGPDGGNGGKGGDVILEVDPQVTTLLDLQRRPHRSAPDGRFGMGSHRNGADGDDLVIGVPDGTIVRSASGELLADLVGPGTRYVAAPGGRGGLGNAALASAKRKAPGFALLGEPGEVLDLHLEVKTLADVALVGFPSAGKSSLVAALSAARPKIADYPFTTLVPNLGVVEAGSTRYTVADVPGLIPGASEGRGLGLDFLRHVERCVALVHVLDGANLETDRDPVSDLEAIEKELAAYRVDDGAVPLQDRPRIIVINKADVPDARDMAEIVRADLEEQGAPVFVVSAVAHTGLRELSFAMAELVSAARAAEPEAVPTRIVLSPRAVDDQGFKVTREEYGDQENRQVRFRVRGEKPRRWVRQTDFTNDEAVGYLADRLARLGVEDELFKAGATPGAEVVIGDDANAVVFDWEPTMHAGAEVLGQRGSDLRLEDHSRPTRDEKRLQERERRAAKVTARDELEAERRAGHWTAADEADEELSQR.

The Obg domain occupies 3-160 (THFVDRVVVH…LDLHLEVKTL (158 aa)). Residues 161-337 (ADVALVGFPS…LSFAMAELVS (177 aa)) form the OBG-type G domain. GTP-binding positions include 167-174 (GFPSAGKS), 192-196 (FTTLV), 213-216 (DVPG), 289-292 (NKAD), and 318-320 (SAV). Residues Ser-174 and Thr-194 each contribute to the Mg(2+) site. An OCT domain is found at 355-444 (PRAVDDQGFK…ANAVVFDWEP (90 aa)). Residues 457-513 (GSDLRLEDHSRPTRDEKRLQERERRAAKVTARDELEAERRAGHWTAADEADEELSQR) are disordered. Basic and acidic residues predominate over residues 458–497 (SDLRLEDHSRPTRDEKRLQERERRAAKVTARDELEAERRA). The segment covering 504–513 (DEADEELSQR) has biased composition (acidic residues).

Belongs to the TRAFAC class OBG-HflX-like GTPase superfamily. OBG GTPase family. In terms of assembly, monomer. The cofactor is Mg(2+).

It localises to the cytoplasm. Its function is as follows. An essential GTPase which binds GTP, GDP and possibly (p)ppGpp with moderate affinity, with high nucleotide exchange rates and a fairly low GTP hydrolysis rate. Plays a role in control of the cell cycle, stress response, ribosome biogenesis and in those bacteria that undergo differentiation, in morphogenesis control. This is GTPase Obg from Kineococcus radiotolerans (strain ATCC BAA-149 / DSM 14245 / SRS30216).